A 60-amino-acid polypeptide reads, in one-letter code: Ferredoxin-1 (60 aa).

4Fe-4S ferredoxin-type domains lie at 2–27 and 28–60; these read LYIT…SAGD and DIYV…IVQG. Cysteine 8, cysteine 11, cysteine 14, cysteine 18, cysteine 37, cysteine 40, cysteine 48, and cysteine 52 together coordinate [4Fe-4S] cluster.

[4Fe-4S] cluster is required as a cofactor.

Its function is as follows. Ferredoxins are iron-sulfur proteins that transfer electrons in a wide variety of metabolic reactions. The polypeptide is Ferredoxin-1 (Chlorobium limicola).